A 416-amino-acid chain; its full sequence is Argininosuccinate synthase (416 aa).

ATP-binding positions include 19–27 and A46; that span reads AYSGGLDTS. Residues Y97 and S102 each coordinate L-citrulline. Position 127 (G127) interacts with ATP. Positions 129, 133, and 134 each coordinate L-aspartate. N133 contacts L-citrulline. R137, S188, S197, E273, and Y285 together coordinate L-citrulline.

The protein belongs to the argininosuccinate synthase family. Type 1 subfamily. Homotetramer.

It is found in the cytoplasm. It catalyses the reaction L-citrulline + L-aspartate + ATP = 2-(N(omega)-L-arginino)succinate + AMP + diphosphate + H(+). It functions in the pathway amino-acid biosynthesis; L-arginine biosynthesis; L-arginine from L-ornithine and carbamoyl phosphate: step 2/3. The sequence is that of Argininosuccinate synthase from Granulibacter bethesdensis (strain ATCC BAA-1260 / CGDNIH1).